Consider the following 41-residue polypeptide: Large ribosomal subunit protein bL36A (41 aa).

This sequence belongs to the bacterial ribosomal protein bL36 family.

The sequence is that of Large ribosomal subunit protein bL36A from Vibrio cholerae serotype O1 (strain ATCC 39541 / Classical Ogawa 395 / O395).